A 734-amino-acid polypeptide reads, in one-letter code: Photosystem I P700 chlorophyll a apoprotein A2 (734 aa).

Transmembrane regions (helical) follow at residues isoleucine 46–alanine 69, leucine 135–glutamine 158, leucine 175–isoleucine 199, isoleucine 273–tyrosine 291, isoleucine 330–tyrosine 353, alanine 369–isoleucine 395, alanine 417–histidine 439, and phenylalanine 517–valine 535. [4Fe-4S] cluster is bound by residues cysteine 559 and cysteine 568. The next 2 helical transmembrane spans lie at alanine 575 to tryptophan 596 and leucine 643 to isoleucine 665. Chlorophyll a-binding residues include histidine 654, methionine 662, and tyrosine 670. Tryptophan 671 lines the phylloquinone pocket. The helical transmembrane segment at leucine 707 to alanine 727 threads the bilayer.

The protein belongs to the PsaA/PsaB family. As to quaternary structure, the PsaA/B heterodimer binds the P700 chlorophyll special pair and subsequent electron acceptors. PSI consists of a core antenna complex that captures photons, and an electron transfer chain that converts photonic excitation into a charge separation. The eukaryotic PSI reaction center is composed of at least 11 subunits. The cofactor is P700 is a chlorophyll a/chlorophyll a' dimer, A0 is one or more chlorophyll a, A1 is one or both phylloquinones and FX is a shared 4Fe-4S iron-sulfur center..

The protein resides in the plastid. The protein localises to the chloroplast thylakoid membrane. It catalyses the reaction reduced [plastocyanin] + hnu + oxidized [2Fe-2S]-[ferredoxin] = oxidized [plastocyanin] + reduced [2Fe-2S]-[ferredoxin]. In terms of biological role, psaA and PsaB bind P700, the primary electron donor of photosystem I (PSI), as well as the electron acceptors A0, A1 and FX. PSI is a plastocyanin-ferredoxin oxidoreductase, converting photonic excitation into a charge separation, which transfers an electron from the donor P700 chlorophyll pair to the spectroscopically characterized acceptors A0, A1, FX, FA and FB in turn. Oxidized P700 is reduced on the lumenal side of the thylakoid membrane by plastocyanin. This Eucalyptus globulus subsp. globulus (Tasmanian blue gum) protein is Photosystem I P700 chlorophyll a apoprotein A2.